A 332-amino-acid chain; its full sequence is Ribosomal RNA small subunit methyltransferase H (332 aa).

S-adenosyl-L-methionine-binding positions include 34 to 36 (GGH), Asp59, Phe86, Asp112, and Gln119.

It belongs to the methyltransferase superfamily. RsmH family.

The protein resides in the cytoplasm. The enzyme catalyses cytidine(1402) in 16S rRNA + S-adenosyl-L-methionine = N(4)-methylcytidine(1402) in 16S rRNA + S-adenosyl-L-homocysteine + H(+). In terms of biological role, specifically methylates the N4 position of cytidine in position 1402 (C1402) of 16S rRNA. This Chlorobium phaeobacteroides (strain BS1) protein is Ribosomal RNA small subunit methyltransferase H.